The chain runs to 299 residues: Elongation factor Ts, mitochondrial (299 aa).

The N-terminal 18 residues, 1 to 18 (MLFQRRLHFHQFFGKTRV), are a transit peptide targeting the mitochondrion.

The protein belongs to the EF-Ts family.

It is found in the mitochondrion. In terms of biological role, associates with the EF-Tu.GDP complex and induces the exchange of GDP to GTP. It remains bound to the aminoacyl-tRNA.EF-Tu.GTP complex up to the GTP hydrolysis stage on the ribosome. This chain is Elongation factor Ts, mitochondrial (tsf1), found in Schizosaccharomyces pombe (strain 972 / ATCC 24843) (Fission yeast).